The primary structure comprises 325 residues: Retinal homeobox protein Rx-B (325 aa).

Residues 32–39 carry the Octapeptide motif motif; it reads HSIEAILG. The span at 75–87 shows a compositional bias: basic and acidic residues; it reads TEEIHPQQEHLED. The interval 75–136 is disordered; sequence TEEIHPQQEH…KKKHRRNRTT (62 aa). Over residues 99–117 the composition is skewed to polar residues; that stretch reads AKTSSECLSPGLSTSNSDN. Positions 130–189 form a DNA-binding region, homeobox; the sequence is HRRNRTTFTTYQLHELERAFEKSHYPDVYSREELAMKVNLPEVRVQVWFQNRRAKWRRQE. Positions 302-315 match the OAR motif; it reads NSIASLRMKAKEHI. A Nuclear localization signal motif is present at residues 308 to 312; the sequence is RMKAK.

The protein belongs to the paired homeobox family. Bicoid subfamily. Highly expressed in anterior neural plate followed by neural retina, pigmented epithelium, in pineal gland, diencephalon floor and epiphysis. At later stages, the neuroretina remains the primary site of expression. No expression in the developing lens and cornea.

The protein localises to the nucleus. Plays a critical role in eye formation by regulating the initial specification of retinal cells and/or their subsequent proliferation. This is Retinal homeobox protein Rx-B (rax-b) from Xenopus laevis (African clawed frog).